A 659-amino-acid chain; its full sequence is DNA helicase/primase complex-associated protein (659 aa).

Belongs to the herpesviridae HEPA family. As to quaternary structure, associates with the primase and the helicase to form the helicase-primase complex. Interacts with the origin-binding protein. Interacts with the polymerase catalytic subunit.

It localises to the host nucleus. Functionally, component of the helicase/primase complex. Unwinds the DNA at the replication forks and generates single-stranded DNA for both leading and lagging strand synthesis. The primase synthesizes short RNA primers on the lagging strand that the polymerase presumably elongates using dNTPs. The primase-associated factor has no known catalytic activity in the complex and may serve to facilitate the formation of the replisome by directly interacting with the origin-binding protein and the polymerase. This chain is DNA helicase/primase complex-associated protein (U74), found in Human herpesvirus 7 (strain JI) (HHV-7).